Here is a 943-residue protein sequence, read N- to C-terminus: Netrin receptor UNC5B-a (943 aa).

The signal sequence occupies residues 1–30 (MYLSRNPSGAALAAILVALILSCNFPSSTA). The Extracellular portion of the chain corresponds to 31–380 (GIEYSDVLPD…LESTGDVALY (350 aa)). In terms of domain architecture, Ig-like spans 51–148 (PHFLLEPEDA…AGTTKSKRSY (98 aa)). Cystine bridges form between C72–C133, C84–C131, C177–C228, C261–C298, C265–C302, C276–C288, C317–C351, C321–C356, and C329–C341. An Ig-like C2-type domain is found at 150-245 (RIAYLRKNFD…KRRSTTATVI (96 aa)). N-linked (GlcNAc...) asparagine glycosylation occurs at N225. 2 consecutive TSP type-1 domains span residues 249-303 (NGGW…TMCP) and 305-357 (DGGW…GLCM). Residue N350 is glycosylated (N-linked (GlcNAc...) asparagine). A helical transmembrane segment spans residues 381 to 401 (AGLVVAIFIVIILLMAVGIVV). Residues 402 to 943 (YRRNCREFDT…MLVMATDGDC (542 aa)) lie on the Cytoplasmic side of the membrane. Residues 542–685 (NSVTGTFGSL…LGTYAFVGES (144 aa)) enclose the ZU5 domain. A UPA domain region spans residues 688 to 836 (RSAIKRLQLA…LEENVKSFDP (149 aa)). The Death domain maps to 863-941 (KICNSLDAPN…EMMLVMATDG (79 aa)).

Belongs to the unc-5 family. Interacts (via extracellular domain) with flrt3 (via extracellular domain). Interacts with rnd1. Post-translationally, phosphorylated on cytoplasmic tyrosine residues. In the developing visual system, it is expressed within the developing optic vesicles and later become restricted to the dorsal ciliary marginal zone, a site of retinoblast proliferation and differentiation.

Its subcellular location is the cell membrane. Functionally, plays a role in cell-cell adhesion during embryonic development. Receptor for netrin required for axon guidance. Mediates axon repulsion of neuronal growth cones in the developing nervous system upon ligand binding. In Xenopus laevis (African clawed frog), this protein is Netrin receptor UNC5B-a (unc5b-a).